The sequence spans 195 residues: uncharacterized protein (195 aa).

The tract at residues asparagine 143–tyrosine 195 is disordered. The span at threonine 148–asparagine 159 shows a compositional bias: low complexity.

This is an uncharacterized protein from Acanthamoeba polyphaga (Amoeba).